A 217-amino-acid polypeptide reads, in one-letter code: MHDQIIPCGMLVAIEGIDGAGKTTLARSLALKLRGVGLETVVSKEPTNGPWGTLLRQSAATGRFSPEEEVDVLLRDRRQHVEDLIVPMIGRGAVVILDRYFPSMVAYQGAAGLPVDALLEANAFAPRPDVLLLLDVPPAIGLQRIWERGSTPNHFETTENLSRCRDIFLALELPSKRVIDATANAETVFSAALGLVMEVLRVRLGALGAVVLERLAG.

16-23 contributes to the ATP binding site; the sequence is GIDGAGKT.

The protein belongs to the thymidylate kinase family.

It carries out the reaction dTMP + ATP = dTDP + ADP. Phosphorylation of dTMP to form dTDP in both de novo and salvage pathways of dTTP synthesis. The polypeptide is Thymidylate kinase (Xylella fastidiosa (strain M12)).